The primary structure comprises 528 residues: GMP synthase [glutamine-hydrolyzing] (528 aa).

Residues 22–212 (AILVLDFGSQ…VFKICQSQTN (191 aa)) enclose the Glutamine amidotransferase type-1 domain. The Nucleophile role is filled by Cys99. Active-site residues include His186 and Glu188. Residues 213-403 (WSLESNVETI…LGIKKEALYR (191 aa)) form the GMPS ATP-PPase domain. 240-246 (SGGTDSL) serves as a coordination point for ATP.

In terms of assembly, homodimer.

It carries out the reaction XMP + L-glutamine + ATP + H2O = GMP + L-glutamate + AMP + diphosphate + 2 H(+). The protein operates within purine metabolism; GMP biosynthesis; GMP from XMP (L-Gln route): step 1/1. Catalyzes the synthesis of GMP from XMP. In Borrelia garinii subsp. bavariensis (strain ATCC BAA-2496 / DSM 23469 / PBi) (Borreliella bavariensis), this protein is GMP synthase [glutamine-hydrolyzing].